We begin with the raw amino-acid sequence, 344 residues long: Nuclear distribution protein nudE-like 1-A (344 aa).

The stretch at 26–187 forms a coiled coil; sequence YKKSYKEAQE…RQELAVRDTR (162 aa). Residues 181-190 are compositionally biased toward basic and acidic residues; the sequence is LAVRDTRSEV. 2 disordered regions span residues 181 to 209 and 322 to 344; these read LAVRDTRSEVTRMSAPSSPTPDNDKTDSA and PGDGTHITAPPRSNSPSGLVLSV.

This sequence belongs to the nudE family. In terms of processing, phosphorylated in mitosis.

The protein localises to the cytoplasm. The protein resides in the cytoskeleton. It is found in the microtubule organizing center. Its subcellular location is the centrosome. It localises to the spindle. Its function is as follows. Required for organization of the cellular microtubule array and microtubule anchoring at the centrosome. Positively regulates the activity of the minus-end directed microtubule motor protein dynein. May enhance dynein-mediated microtubule sliding by targeting dynein to the microtubule plus end. The protein is Nuclear distribution protein nudE-like 1-A (ndel1a) of Danio rerio (Zebrafish).